The following is a 374-amino-acid chain: Speckle-type POZ protein (374 aa).

Positions 31–161 (KFSYMWTINN…DDKLTLFCEV (131 aa)) constitute an MATH domain. Residues 71–191 (VNPKGLDEES…PECRLADELG (121 aa)) are required for nuclear localization. An important for binding substrate proteins region spans residues 123 to 133 (YRFVQGKDWGF). The BTB domain maps to 173–297 (QNTMNMVKVP…MCEDALCSNL (125 aa)). Important for homodimerization stretches follow at residues 186–217 (LADE…HKAI) and 297–355 (LSVE…AYRS).

This sequence belongs to the Tdpoz family. Interacts with GLI2 and GLI3. Homodimer and homooligomer. Heterodimer with SPOPL. Each dimer interacts with two CUL3 molecules. Part of cullin-RING-based BCR (BTB-CUL3-RBX1) E3 ubiquitin-protein ligase complexes that contain CUL3 and homodimeric SPOP, or the heterodimer formed by SPOP and SPOPL, plus a target protein, such as MACROH2A1, PDX1/IPF1, BMI1, BRMS1 and DAXX. Interacts with IRF1; this interaction mediates IRF1 proteasomal degradation. Interacts with HNF1A.

Its subcellular location is the nucleus. The protein localises to the nucleus speckle. It participates in protein modification; protein ubiquitination. Its function is as follows. Component of a cullin-RING-based BCR (BTB-CUL3-RBX1) E3 ubiquitin-protein ligase complex that mediates the ubiquitination of target proteins, leading most often to their proteasomal degradation. In complex with CUL3, involved in ubiquitination and proteasomal degradation of BRMS1, DAXX, PDX1/IPF1, GLI2 and GLI3. In complex with CUL3, involved in ubiquitination of MACROH2A1 and BMI1; this does not lead to their proteasomal degradation. Inhibits transcriptional activation of PDX1/IPF1 targets, such as insulin, by promoting PDX1/IPF1 degradation. The cullin-RING-based BCR (BTB-CUL3-RBX1) E3 ubiquitin-protein ligase complex containing homodimeric SPOP has higher ubiquitin ligase activity than the complex that contains the heterodimer formed by SPOP and SPOPL. Involved in the regulation of bromodomain and extra-terminal motif (BET) proteins BRD2, BRD3, BRD4 stability.Plays an essential role for proper translation, but not for their degradation, of critical DNA replication licensing factors CDT1 and CDC6, thereby participating in DNA synthesis and cell proliferation. Regulates interferon regulatory factor 1/IRF1 proteasomal turnover by targeting S/T-rich degrons in IRF1. Involved in ubiquitination of BRDT and promotes its degradation, thereby regulates histone removal in early condensing spermatids prior to histone-to-protamine exchange. This is Speckle-type POZ protein (SPOP) from Bos taurus (Bovine).